We begin with the raw amino-acid sequence, 80 residues long: Exodeoxyribonuclease 7 small subunit (80 aa).

It belongs to the XseB family. Heterooligomer composed of large and small subunits.

Its subcellular location is the cytoplasm. The catalysed reaction is Exonucleolytic cleavage in either 5'- to 3'- or 3'- to 5'-direction to yield nucleoside 5'-phosphates.. Bidirectionally degrades single-stranded DNA into large acid-insoluble oligonucleotides, which are then degraded further into small acid-soluble oligonucleotides. This chain is Exodeoxyribonuclease 7 small subunit, found in Rickettsia africae (strain ESF-5).